The chain runs to 1129 residues: MTSSGKVRIYELSKDLGLENKDVLDAAEKLSIAARSHSSSISETEAGKIRTLLKQGGSPVASAPAKPAPGKAILSVRKASSPAAPSMPSKPAAPAAAKPSPKPSAPSRPEAPLPLIVQKPVSRQAAPQKPVSRQSTPAAAAPAAAPSAPAPSAPTPRPKPTAPKASAPAPTASAPSAPPRPTSARPTPAPARPTGTSPVKRPGSEASSPRPTAPPTRPQPKAPVNRGAPARPAPKPELVGRPQPKRAAPGAPVRQIGQRPGVSPRPSGPPGQRANMPQRPAGSQRPGAPTRPGNAPSKPGQPRSGASSLELVGKPIRRDGSNDGAGGRSDGQGRPPGAPRPGAPRPGGMPGMRKPVAPGELMQLQKPNSRPSAPPPRRVDGTPVATRSGEAAAGGAKATPPVSRPTATPPAAPRRPGFRPGPGAGGQRRPGRPDWDDSAKLEALRSKSPQKQRQKVHIIGENDDALTAETGGFAGERQAMVLSASLARPSKPRTKHKPAPKPVAAIRKRRKETARQRQRRRAMELRAAREAKQVRPEMIVVPEDNLTVQELADMLSIESSEIIKSLFFKGVIATVTQTLDMPTIEAVAQEFGVPVLQDDVEEAAKKTVEMIEEKDHAHLIRRPPVVTVMGHVDHGKTSLLDAIRQARVAAGEAGGITQHIGAYQVEIQHNDSPQRLTFLDTPGHEAFTAMRARGTKVTDVAVLVVAADDGVRPQTLEAISHARAAEVPVVVAINKIDKEGASPDRVKQELSEQNLLAEDWGGDVVMVPVSALRGENIDKLLEMILLVTEVEDLQANPDRLAKGTVIEAHLDKAKGPVATLLVQNGTLRTGDVLAAGPVLGKVRAMVDDGGGRLKEAGPSCAVEALGFSEVPTAGDEFEVYPDEKSARAVVGDRASDARASRLAQQMASRRVSLTAMSGQAKEGELKELNLILKADVQGSVEAILGSLEQLPKDEVQVRVLLSAPGEVTETDVDLAAASGAVIVGFNTSMASGAKRAADANSVDVRDYDVIYKLLEDIQLAMEGLLEPELVEESLGEAEVRAVFTIGKSAVAGCYVTTGKLQRNCKVRVRRGKEIVFAGDLDSLRRNKDDVKDVATGFECGIGCDRFANWKDGDIVEGYKLVTQRRKLAT.

2 stretches are compositionally biased toward low complexity: residues 33–42 and 56–99; these read AARSHSSSIS and GGSP…AAKP. Disordered regions lie at residues 33–462 and 485–515; these read AARS…IGEN and SLAR…ETAR. Residues 100 to 112 are compositionally biased toward pro residues; the sequence is SPKPSAPSRPEAP. Residues 135-147 show a composition bias toward low complexity; it reads STPAAAAPAAAPS. The span at 148 to 161 shows a compositional bias: pro residues; it reads APAPSAPTPRPKPT. A compositionally biased stretch (low complexity) spans 162–175; sequence APKASAPAPTASAP. Composition is skewed to pro residues over residues 176–191 and 211–221; these read SAPP…PAPA and PTAPPTRPQPK. A compositionally biased stretch (low complexity) spans 257–273; that stretch reads GQRPGVSPRPSGPPGQR. The segment covering 431-445 has biased composition (basic and acidic residues); the sequence is GRPDWDDSAKLEALR. Basic residues-rich tracts occupy residues 490–499 and 506–515; these read SKPRTKHKPA and IRKRRKETAR. One can recognise a tr-type G domain in the interval 621-793; sequence RRPPVVTVMG…ILLVTEVEDL (173 aa). The tract at residues 630–637 is G1; it reads GHVDHGKT. Position 630–637 (630–637) interacts with GTP; it reads GHVDHGKT. A G2 region spans residues 655-659; the sequence is GITQH. The interval 680–683 is G3; that stretch reads DTPG. Residues 680–684 and 734–737 contribute to the GTP site; these read DTPGH and NKID. The segment at 734 to 737 is G4; it reads NKID. The tract at residues 770-772 is G5; it reads SAL.

The protein belongs to the TRAFAC class translation factor GTPase superfamily. Classic translation factor GTPase family. IF-2 subfamily.

Its subcellular location is the cytoplasm. In terms of biological role, one of the essential components for the initiation of protein synthesis. Protects formylmethionyl-tRNA from spontaneous hydrolysis and promotes its binding to the 30S ribosomal subunits. Also involved in the hydrolysis of GTP during the formation of the 70S ribosomal complex. The sequence is that of Translation initiation factor IF-2 from Synechococcus sp. (strain CC9311).